The sequence spans 428 residues: Putative oxidoreductase YteT (428 aa).

The signal sequence occupies residues 1 to 23; it reads MKNIVFCGLSSRAFSMFIKPLME.

The protein belongs to the Gfo/Idh/MocA family.

Functionally, may play a role in the degradation of type I rhamnogalacturonan derived from plant cell walls. The protein is Putative oxidoreductase YteT (yteT) of Bacillus subtilis (strain 168).